The chain runs to 692 residues: Proprotein convertase subtilisin/kexin type 9 (692 aa).

Positions 1 to 30 (MGTVSSRRSWWPLPLLLLLLLLLGPAGARA) are cleaved as a signal peptide. Positions 31–152 (QEDEDGDYEE…IEEDSSVFAQ (122 aa)) are excised as a propeptide. A Sulfotyrosine modification is found at Tyr38. Ser47 carries the phosphoserine modification. The region spanning 77-149 (TYVVVLKEET…VDYIEEDSSV (73 aa)) is the Inhibitor I9 domain. The 307-residue stretch at 155 to 461 (PWNLERITPP…GWQLFCRTVW (307 aa)) folds into the Peptidase S8 domain. Catalysis depends on charge relay system residues Asp186 and His226. Disulfide bonds link Cys223–Cys255 and Cys323–Cys358. Residue Ser386 is the Charge relay system of the active site. The tract at residues 450 to 692 (GAGWQLFCRT…HLAQASQELQ (243 aa)) is C-terminal domain. Intrachain disulfides connect Cys457–Cys527, Cys477–Cys526, and Cys486–Cys509. Asn533 carries N-linked (GlcNAc...) asparagine glycosylation. Disulfide bonds link Cys534–Cys601, Cys552–Cys600, Cys562–Cys588, Cys608–Cys679, Cys626–Cys678, and Cys635–Cys654. Ser688 carries the post-translational modification Phosphoserine.

The protein belongs to the peptidase S8 family. Monomer. Can self-associate to form dimers and higher multimers which may have increased LDLR degrading activity. The precursor protein but not the mature protein may form multimers. Interacts with APOB, VLDLR, LRP8/APOER2 and BACE1. The full-length immature form (pro-PCSK9) interacts with SCNN1A, SCNN1B and SCNN1G. The pro-PCSK9 form (via C-terminal domain) interacts with LDLR. Interacts (via the C-terminal domain) with ANXA2 (via repeat Annexin 1); the interaction inhibits the degradation of LDLR. It depends on Ca(2+) as a cofactor. Post-translationally, cleavage by furin and PCSK5 generates a truncated inactive protein that is unable to induce LDLR degradation. Undergoes autocatalytic cleavage in the endoplasmic reticulum to release the propeptide from the N-terminus and the cleavage of the propeptide is strictly required for its maturation and activation. The cleaved propeptide however remains associated with the catalytic domain through non-covalent interactions, preventing potential substrates from accessing its active site. As a result, it is secreted from cells as a propeptide-containing, enzymatically inactive protein. In terms of processing, phosphorylation protects the propeptide against proteolysis.

It is found in the cytoplasm. It localises to the secreted. Its subcellular location is the endosome. The protein localises to the lysosome. The protein resides in the cell surface. It is found in the endoplasmic reticulum. It localises to the golgi apparatus. With respect to regulation, its proteolytic activity is autoinhibited by the non-covalent binding of the propeptide to the catalytic domain. Inhibited by EGTA. Functionally, crucial player in the regulation of plasma cholesterol homeostasis. Binds to low-density lipid receptor family members: low density lipoprotein receptor (LDLR), very low density lipoprotein receptor (VLDLR), apolipoprotein E receptor (LRP1/APOER) and apolipoprotein receptor 2 (LRP8/APOER2), and promotes their degradation in intracellular acidic compartments. Acts via a non-proteolytic mechanism to enhance the degradation of the hepatic LDLR through a clathrin LDLRAP1/ARH-mediated pathway. May prevent the recycling of LDLR from endosomes to the cell surface or direct it to lysosomes for degradation. Can induce ubiquitination of LDLR leading to its subsequent degradation. Inhibits intracellular degradation of APOB via the autophagosome/lysosome pathway in a LDLR-independent manner. Involved in the disposal of non-acetylated intermediates of BACE1 in the early secretory pathway. Inhibits epithelial Na(+) channel (ENaC)-mediated Na(+) absorption by reducing ENaC surface expression primarily by increasing its proteasomal degradation. Regulates neuronal apoptosis via modulation of LRP8/APOER2 levels and related anti-apoptotic signaling pathways. This chain is Proprotein convertase subtilisin/kexin type 9 (PCSK9), found in Pan paniscus (Pygmy chimpanzee).